We begin with the raw amino-acid sequence, 86 residues long: UPF0367 protein NATL1_01981 (86 aa).

This sequence belongs to the UPF0367 family.

In Prochlorococcus marinus (strain NATL1A), this protein is UPF0367 protein NATL1_01981.